A 71-amino-acid chain; its full sequence is Heat-stable enterotoxin B (71 aa).

The N-terminal stretch at 1 to 19 is a signal peptide; the sequence is MKKIILALVLMLFSFCTLG. Residues 20-52 constitute a propeptide that is removed on maturation; it reads QETASMHLDDTLSAPIAAEINRKACDTQTPSPS. Intrachain disulfides connect cysteine 59–cysteine 64, cysteine 60–cysteine 68, and cysteine 63–cysteine 71.

This sequence belongs to the heat-stable enterotoxin family.

Its subcellular location is the secreted. Its function is as follows. Toxin which activates the particulate form of guanylate cyclase and increases cyclic GMP levels within the host intestinal epithelial cells. Could play an important role in pathogenesis. The chain is Heat-stable enterotoxin B (ystB) from Yersinia enterocolitica.